Reading from the N-terminus, the 126-residue chain is Large ribosomal subunit protein eL8 (126 aa).

The protein belongs to the eukaryotic ribosomal protein eL8 family. As to quaternary structure, part of the 50S ribosomal subunit. Probably part of the RNase P complex.

The protein resides in the cytoplasm. Multifunctional RNA-binding protein that recognizes the K-turn motif in ribosomal RNA, the RNA component of RNase P, box H/ACA, box C/D and box C'/D' sRNAs. In Sulfolobus acidocaldarius (strain ATCC 33909 / DSM 639 / JCM 8929 / NBRC 15157 / NCIMB 11770), this protein is Large ribosomal subunit protein eL8.